A 394-amino-acid chain; its full sequence is Elongation factor Tu (394 aa).

The tr-type G domain occupies 10–204 (KPHVNVGTIG…ALDSYIPTPE (195 aa)). Residues 19-26 (GHVDHGKT) form a G1 region. Position 19-26 (19-26 (GHVDHGKT)) interacts with GTP. Threonine 26 is a binding site for Mg(2+). The tract at residues 60-64 (GITIN) is G2. Residues 81–84 (DCPG) form a G3 region. GTP-binding positions include 81–85 (DCPGH) and 136–139 (NKCD). Residues 136 to 139 (NKCD) form a G4 region. The segment at 174-176 (SAL) is G5.

The protein belongs to the TRAFAC class translation factor GTPase superfamily. Classic translation factor GTPase family. EF-Tu/EF-1A subfamily. As to quaternary structure, monomer.

Its subcellular location is the cytoplasm. It catalyses the reaction GTP + H2O = GDP + phosphate + H(+). Functionally, GTP hydrolase that promotes the GTP-dependent binding of aminoacyl-tRNA to the A-site of ribosomes during protein biosynthesis. This chain is Elongation factor Tu, found in Neisseria gonorrhoeae (strain ATCC 700825 / FA 1090).